The primary structure comprises 212 residues: Pyridoxine/pyridoxamine 5'-phosphate oxidase (212 aa).

Residues 8 to 11 (RREY) and Lys66 each bind substrate. FMN contacts are provided by residues 61 to 66 (RIVLLK), 76 to 77 (FT), Arg82, Lys83, and Gln105. Residues Tyr123, Arg127, and Ser131 each contribute to the substrate site. FMN-binding positions include 140 to 141 (QS) and Trp185. A substrate-binding site is contributed by 191–193 (RLH). Arg195 provides a ligand contact to FMN.

The protein belongs to the pyridoxamine 5'-phosphate oxidase family. As to quaternary structure, homodimer. FMN is required as a cofactor.

It catalyses the reaction pyridoxamine 5'-phosphate + O2 + H2O = pyridoxal 5'-phosphate + H2O2 + NH4(+). The catalysed reaction is pyridoxine 5'-phosphate + O2 = pyridoxal 5'-phosphate + H2O2. Its pathway is cofactor metabolism; pyridoxal 5'-phosphate salvage; pyridoxal 5'-phosphate from pyridoxamine 5'-phosphate: step 1/1. It functions in the pathway cofactor metabolism; pyridoxal 5'-phosphate salvage; pyridoxal 5'-phosphate from pyridoxine 5'-phosphate: step 1/1. Catalyzes the oxidation of either pyridoxine 5'-phosphate (PNP) or pyridoxamine 5'-phosphate (PMP) into pyridoxal 5'-phosphate (PLP). The protein is Pyridoxine/pyridoxamine 5'-phosphate oxidase of Shewanella putrefaciens (strain CN-32 / ATCC BAA-453).